Here is a 157-residue protein sequence, read N- to C-terminus: Small ribosomal subunit protein uS7 (157 aa).

The protein belongs to the universal ribosomal protein uS7 family. Part of the 30S ribosomal subunit. Contacts proteins S9 and S11.

Functionally, one of the primary rRNA binding proteins, it binds directly to 16S rRNA where it nucleates assembly of the head domain of the 30S subunit. Is located at the subunit interface close to the decoding center, probably blocks exit of the E-site tRNA. This chain is Small ribosomal subunit protein uS7, found in Psychrobacter cryohalolentis (strain ATCC BAA-1226 / DSM 17306 / VKM B-2378 / K5).